The sequence spans 216 residues: Transmembrane emp24 domain-containing protein eca (216 aa).

The N-terminal stretch at 1 to 20 (MRDQFISLALMLCILHSACG) is a signal peptide. The Lumenal segment spans residues 21–182 (LYFHISETER…FRHTSESTNS (162 aa)). Residues 30–126 (RKCFIEEVPD…QLRVHLDIQV (97 aa)) enclose the GOLD domain. Residues 134–164 (ANVAQKEKLTELQLRIRQLLDQVEQITKEQN) adopt a coiled-coil conformation. A helical transmembrane segment spans residues 183-203 (RVLWWSLAQTVVLVCMGFWQM). Over 204 to 216 (RHLKSFFEAKKLV) the chain is Cytoplasmic. The short motif at 213-216 (KKLV) is the Prevents secretion from ER element.

It belongs to the EMP24/GP25L family.

The protein localises to the endoplasmic reticulum membrane. In terms of biological role, eca and bai are essential, though not redundant, for dorsoventral patterning of the embryo. Specifically required during early embryogenesis for the activity of maternal tkv, while the zygotic tkv is not affected. Involved in Golgi organization. This is Transmembrane emp24 domain-containing protein eca from Drosophila erecta (Fruit fly).